Here is a 713-residue protein sequence, read N- to C-terminus: Endopolyphosphatase (713 aa).

Residues 1-19 lie on the Cytoplasmic side of the membrane; the sequence is MSVLIDEKSHRSSGSTRSR. Residues 20 to 40 form a helical; Signal-anchor for type II membrane protein membrane-spanning segment; that stretch reads IVVTVVGVLLMVSGLAVMLGH. At 41–713 the chain is on the vacuolar side; sequence QSGSANEALG…SSEYENMGMG (673 aa). Residues 399-418 are compositionally biased toward acidic residues; that stretch reads SDDDDNSDSDSDDDDEDTSL. Residues 399–430 form a disordered region; it reads SDDDDNSDSDSDDDDEDTSLEESYSNFNSPIL. Asn507 and Asn645 each carry an N-linked (GlcNAc...) asparagine glycan. Basic residues predominate over residues 640–659; it reads VKEKKNKSNKKSKKKKKNKD. A disordered region spans residues 640–684; that stretch reads VKEKKNKSNKKSKKKKKNKDKRLLENSEPLKQDGSKDSRLEQDRV. Positions 660-683 are enriched in basic and acidic residues; the sequence is KRLLENSEPLKQDGSKDSRLEQDR.

This sequence belongs to the endopolyphosphatase PPN1 family. It depends on a divalent metal cation as a cofactor. Processing by proteases in the vacuole may be required for activation.

The protein resides in the vacuole membrane. The catalysed reaction is [phosphate](n+1) + n H2O = (n+1) phosphate + n H(+). Its function is as follows. Catalyzes the hydrolysis of inorganic polyphosphate (polyP) chains of many hundreds of phosphate residues into shorter lengths. The polypeptide is Endopolyphosphatase (PPN1) (Debaryomyces hansenii (strain ATCC 36239 / CBS 767 / BCRC 21394 / JCM 1990 / NBRC 0083 / IGC 2968) (Yeast)).